Consider the following 318-residue polypeptide: NADH-ubiquinone oxidoreductase chain 1 (318 aa).

The next 9 helical transmembrane spans lie at Phe-2–Leu-22, Pro-37–Ile-57, Leu-69–Met-89, Leu-100–Gly-120, Val-136–Met-156, His-171–Ala-191, Ile-231–Phe-251, Glu-253–Val-273, and Phe-293–Gly-313.

It belongs to the complex I subunit 1 family. In terms of assembly, core subunit of respiratory chain NADH dehydrogenase (Complex I) which is composed of 45 different subunits.

The protein resides in the mitochondrion inner membrane. The enzyme catalyses a ubiquinone + NADH + 5 H(+)(in) = a ubiquinol + NAD(+) + 4 H(+)(out). In terms of biological role, core subunit of the mitochondrial membrane respiratory chain NADH dehydrogenase (Complex I) which catalyzes electron transfer from NADH through the respiratory chain, using ubiquinone as an electron acceptor. Essential for the catalytic activity and assembly of complex I. The sequence is that of NADH-ubiquinone oxidoreductase chain 1 (MT-ND1) from Euphractus sexcinctus (Six-banded armadillo).